We begin with the raw amino-acid sequence, 451 residues long: UDP-N-acetylmuramate--L-alanine ligase (451 aa).

110-116 (GTHGKTT) is a binding site for ATP.

Belongs to the MurCDEF family.

The protein resides in the cytoplasm. It catalyses the reaction UDP-N-acetyl-alpha-D-muramate + L-alanine + ATP = UDP-N-acetyl-alpha-D-muramoyl-L-alanine + ADP + phosphate + H(+). Its pathway is cell wall biogenesis; peptidoglycan biosynthesis. In terms of biological role, cell wall formation. The protein is UDP-N-acetylmuramate--L-alanine ligase of Francisella tularensis subsp. holarctica (strain FTNF002-00 / FTA).